Here is a 261-residue protein sequence, read N- to C-terminus: Thiazole synthase (261 aa).

Lysine 95 functions as the Schiff-base intermediate with DXP in the catalytic mechanism. 1-deoxy-D-xylulose 5-phosphate contacts are provided by residues glycine 156, 182–183 (AG), and 204–205 (NT).

Belongs to the ThiG family. As to quaternary structure, homotetramer. Forms heterodimers with either ThiH or ThiS.

The protein localises to the cytoplasm. The catalysed reaction is [ThiS sulfur-carrier protein]-C-terminal-Gly-aminoethanethioate + 2-iminoacetate + 1-deoxy-D-xylulose 5-phosphate = [ThiS sulfur-carrier protein]-C-terminal Gly-Gly + 2-[(2R,5Z)-2-carboxy-4-methylthiazol-5(2H)-ylidene]ethyl phosphate + 2 H2O + H(+). It participates in cofactor biosynthesis; thiamine diphosphate biosynthesis. Functionally, catalyzes the rearrangement of 1-deoxy-D-xylulose 5-phosphate (DXP) to produce the thiazole phosphate moiety of thiamine. Sulfur is provided by the thiocarboxylate moiety of the carrier protein ThiS. In vitro, sulfur can be provided by H(2)S. The sequence is that of Thiazole synthase from Pectobacterium carotovorum subsp. carotovorum (strain PC1).